Here is a 445-residue protein sequence, read N- to C-terminus: Histamine H3 receptor (445 aa).

The Extracellular portion of the chain corresponds to 1–39; it reads MERAPPDGPLNASGALAGEAAAAGGARGFSAAWTAVLAA. Asn-11 carries N-linked (GlcNAc...) asparagine glycosylation. The chain crosses the membrane as a helical span at residues 40–60; the sequence is LMALLIVATVLGNALVMLAFV. Residues 61 to 70 are Cytoplasmic-facing; that stretch reads ADSSLRTQNN. Residues 71 to 91 traverse the membrane as a helical segment; it reads FFLLNLAISDFLVGAFCIPLY. At 92–108 the chain is on the extracellular side; the sequence is VPYVLTGRWTFGRGLCK. An intrachain disulfide couples Cys-107 to Cys-188. The helical transmembrane segment at 109-129 threads the bilayer; that stretch reads LWLVVDYLLCTSSAFNIVLIS. Residues 130–156 lie on the Cytoplasmic side of the membrane; sequence YDRFLSVTRAVSYRAQQGDTRRAVRKM. The helical transmembrane segment at 157-177 threads the bilayer; that stretch reads LLVWVLAFLLYGPAILSWEYL. Residues 178 to 196 are Extracellular-facing; the sequence is SGGSSIPEGHCYAEFFYNW. Residues 197–217 form a helical membrane-spanning segment; sequence YFLITASTLEFFTPFLSVTFF. The Cytoplasmic segment spans residues 218–359; that stretch reads NLSIYLNIQR…LSRDRKVAKS (142 aa). Disordered stretches follow at residues 237 to 260 and 288 to 336; these read REAAGPEPPPEAQPSPPPPPGCWG and EATL…LEKR. Residues 242–257 show a composition bias toward pro residues; that stretch reads PEPPPEAQPSPPPPPG. Gly residues predominate over residues 290-299; sequence TLGGGGGGGS. The segment covering 300 to 312 has biased composition (low complexity); it reads VASPTSSSGSSSR. A helical membrane pass occupies residues 360-380; that stretch reads LAVIVSIFGLCWAPYTLLMII. Topologically, residues 381–395 are extracellular; that stretch reads RAACHGHCVPDYWYE. A helical transmembrane segment spans residues 396–416; it reads TSFWLLWANSAVNPVLYPLCH. Residues 417-445 are Cytoplasmic-facing; it reads HSFRRAFTKLLCPQKLKIQPHSSLEHCWK. Ser-439 is modified (phosphoserine).

Belongs to the G-protein coupled receptor 1 family. As to expression, expressed predominantly in the CNS, with the greatest expression in the thalamus and caudate nucleus. The various isoforms are mainly coexpressed in brain, but their relative expression level varies in a region-specific manner. Isoform 3 and isoform 7 are highly expressed in the thalamus, caudate nucleus and cerebellum while isoform 5 and isoform 6 show a poor expression. Isoform 5 and isoform 6 show a high expression in the amygdala, substantia nigra, cerebral cortex and hypothalamus. Isoform 7 is not found in hypothalamus or substantia nigra.

The protein localises to the cell membrane. Its function is as follows. The H3 subclass of histamine receptors could mediate the histamine signals in CNS and peripheral nervous system. Signals through the inhibition of adenylate cyclase and displays high constitutive activity (spontaneous activity in the absence of agonist). Agonist stimulation of isoform 3 neither modified adenylate cyclase activity nor induced intracellular calcium mobilization. The sequence is that of Histamine H3 receptor (HRH3) from Homo sapiens (Human).